Consider the following 264-residue polypeptide: Accessory gland-specific peptide 26Aa (264 aa).

The first 18 residues, 1–18 (MNQILLCSPILLLLFTVA), serve as a signal peptide directing secretion. Positions 1 to 138 (MNQILLCSPI…LQQRLLTEQN (138 aa)) are sufficient for promoting ovulation when expressed in females. Residues asparagine 88, asparagine 122, asparagine 138, and asparagine 145 are each glycosylated (N-linked (GlcNAc...) asparagine). The disordered stretch occupies residues 189–219 (LQNTRKSTKPCKKRSSKDSAPPAANQFQEAN). Residues 194-203 (KSTKPCKKRS) are compositionally biased toward basic residues. The tract at residues 219–264 (NVRNTYRNKYLTLLKELSQKINNEIAKVATDVPTETNPSQGNLPTL) is necessary and sufficient for homodimerization.

In terms of assembly, homodimer. May form a homodimer. In terms of processing, glycosylation. Undergoes several cleavages as it is secreted and is further processed in the recipient female. The precursor molecule is proteolytically cleaved by the seminal metalloprotease Semp1 at Lys-48 to produce CP1-N and CP1-C. Post-translationally, cleaved at Lys-67 by Semp1 to generate CP2-N and CP2-C. Cleavage appears to take place in the mated female genital tract. In terms of processing, cleaved at Lys-117 by Semp1 to generate CP3-N and CP3-C. Cleavage appears to take place in the mated female genital tract. As to expression, produced in the male accessory glands and secreted into seminal fluid (at protein level). Detected in the main cells and secondary cells of the accessory glands of 1 day old males (at protein level). In 5 day old males, confined to the secondary cells and only reappears in the main cells after mating (at protein level). Produced in adult males 3-4 hr after eclosion, levels increase reaching a peak at day 3-5 which is maintained until at least day 10 of adulthood (at protein level). In unmated male adults, levels are maintained for the first 6 days of adulthood and then gradually decrease for at least the next 8 days. In mated females, detected in the genital tract 3 minutes after the start of mating (ASM) and is secreted into the female hemolymph via the posterior vaginal wall 5 minutes ASM (at protein level).

Its subcellular location is the secreted. It localises to the cytoplasm. Functionally, male seminal protein which enhances ovulation in female Drosophila by stimulating the release of oocytes by the ovary following mating. Acts by increasing octopamine (OA) neuronal signaling in the female genital tract leading to the postmating relaxation of the oviduct muscles. This activation of the OA signaling pathway is likely to indirectly contribute to the mating-dependent increase in the number of OA synaptic sites in the female reproductive tract. Its function is as follows. Male seminal peptide which is able to enhance ovulation in female Drosophila. The sequence is that of Accessory gland-specific peptide 26Aa from Drosophila melanogaster (Fruit fly).